Reading from the N-terminus, the 83-residue chain is Protein ORF5 (83 aa).

The protein belongs to the microviridae C protein family.

Its function is as follows. Plays a central role in the packaging of viral DNA into phage procapsid, which occurs in the late stage of infection. Can interact with the replicative complex after the completion of one round of DNA synthesis. When protein ORF5 is bound to the replicative form, the complex becomes accessible to procapsid and serves as a DNA packaging apparatus. The sequence is that of Protein ORF5 from Spiroplasma melliferum (SpV4).